The primary structure comprises 229 residues: MTCCEGWTSCNGFSLLVLLLLGVVLNAIPLIVSLVEEDQFSQNPISCFEWWFPGIIGAGLMAIPATTMSLTARKRACCNNRTGMFLSSLFSVITVIGALYCMLISIQALLKGPLMCNSPSNSNANCEFSLKNISDIHPESFNLQWFFNDSCAPPTGFNKPTSNDTMASGWRASSFHFDSEENKHRLIHFSVFLGLLLVGILEVLFGLSQIVIGFLGCLCGVSKRRSQIV.

The Lumenal segment spans residues 1–14 (MTCCEGWTSCNGFS). Residues 15–35 (LLVLLLLGVVLNAIPLIVSLV) form a helical membrane-spanning segment. Topologically, residues 36-44 (EEDQFSQNP) are cytoplasmic. The helical transmembrane segment at 45–65 (ISCFEWWFPGIIGAGLMAIPA) threads the bilayer. At 66–83 (TTMSLTARKRACCNNRTG) the chain is on the lumenal side. The chain crosses the membrane as a helical span at residues 84 to 104 (MFLSSLFSVITVIGALYCMLI). Topologically, residues 105 to 185 (SIQALLKGPL…HFDSEENKHR (81 aa)) are cytoplasmic. Residues 186–206 (LIHFSVFLGLLLVGILEVLFG) traverse the membrane as a helical segment. Topologically, residues 207–229 (LSQIVIGFLGCLCGVSKRRSQIV) are lumenal.

The protein belongs to the L6 tetraspanin family. Post-translationally, glycosylated at Asn-132, Asn-148 and Asn-163 in presence of ceramide which inverts the orientation of TM4SF20 in membranes exposing these residues to the endoplasmic reticulum lumen. In terms of processing, cleaved by signal peptidase at Ser-14 but the peptide does not act as a signal peptide. Cleavage is inhibited by ceramide which inverts the orientation of TM4SF20 in membranes exposing the N-terminus to the cytosol and not to the endoplasmic reticulum lumen. Expressed in the brain, with high levels in the parietal lobe, hippocampus, pons, white matter and cerebellum.

It localises to the membrane. The protein resides in the endoplasmic reticulum membrane. Its function is as follows. Polytopic transmembrane protein that inhibits regulated intramembrane proteolysis (RIP) of CREB3L1, inhibiting its activation and the induction of collagen synthesis. In response to ceramide, which alters TM4SF20 membrane topology, stimulates RIP activation of CREB3L1. Ceramide reverses the direction through which transmembrane helices are translocated into the endoplasmic reticulum membrane during translation of TM4SF20, this mechanism is called 'regulated alternative translocation' (RAT) and regulates the function of the transmembrane protein. The polypeptide is Transmembrane 4 L6 family member 20 (TM4SF20) (Homo sapiens (Human)).